The sequence spans 425 residues: Histidine--tRNA ligase (425 aa).

This sequence belongs to the class-II aminoacyl-tRNA synthetase family. As to quaternary structure, homodimer.

The protein localises to the cytoplasm. The catalysed reaction is tRNA(His) + L-histidine + ATP = L-histidyl-tRNA(His) + AMP + diphosphate + H(+). The protein is Histidine--tRNA ligase of Streptomyces coelicolor (strain ATCC BAA-471 / A3(2) / M145).